A 275-amino-acid chain; its full sequence is tRNA pseudouridine synthase A (275 aa).

Aspartate 55 acts as the Nucleophile in catalysis. Position 111 (tyrosine 111) interacts with substrate.

It belongs to the tRNA pseudouridine synthase TruA family.

The enzyme catalyses uridine(38/39/40) in tRNA = pseudouridine(38/39/40) in tRNA. Formation of pseudouridine at positions 38, 39 and 40 in the anticodon stem and loop of transfer RNAs. This chain is tRNA pseudouridine synthase A, found in Methanococcoides burtonii (strain DSM 6242 / NBRC 107633 / OCM 468 / ACE-M).